The sequence spans 635 residues: Multiple inositol polyphosphate phosphatase 1 (635 aa).

A signal peptide spans Met1–Ser23. The Extracellular segment spans residues Leu24–Ser565. The disordered stretch occupies residues Lys66–Pro102. The segment covering Asn67–Asn99 has biased composition (low complexity). His116 is an active-site residue. Over residues Ser380–Asp421 the composition is skewed to low complexity. The segment at Ser380–Glu425 is disordered. The helical transmembrane segment at Tyr566–Phe586 threads the bilayer. Residues Thr587–Gln635 are Cytoplasmic-facing. The span at Ser614–Pro624 shows a compositional bias: low complexity. The interval Ser614–Gln635 is disordered.

It belongs to the histidine acid phosphatase family. MINPP1 subfamily.

It is found in the membrane. The enzyme catalyses 1D-myo-inositol hexakisphosphate + H2O = 1D-myo-inositol 1,2,4,5,6-pentakisphosphate + phosphate. It carries out the reaction 1D-myo-inositol 1,2,4,5,6-pentakisphosphate + H2O = 1D-myo-inositol 1,2,5,6-tetrakisphosphate + phosphate. It catalyses the reaction 1D-myo-inositol 1,2,5,6-tetrakisphosphate + H2O = 1D-myo-inositol 1,2,6-trisphosphate + phosphate. The catalysed reaction is 1D-myo-inositol 1,2,6-trisphosphate + H2O = 1D-myo-inositol 1,2-bisphosphate + phosphate. The enzyme catalyses 1D-myo-inositol 1,2-bisphosphate + H2O = 1D-myo-inositol 2-phosphate + phosphate. It carries out the reaction (2R)-2,3-bisphosphoglycerate + H2O = (2R)-2-phosphoglycerate + phosphate. Probable multiple inositol polyphosphate phosphatase that hydrolyzes 1D-myo-inositol 1,3,4,5,6-pentakisphosphate (InsP5[2OH]) and 1D-myo-inositol hexakisphosphate (InsP6) to a range of less phosphorylated inositol phosphates. This regulates the availability of these various small molecule second messengers and metal chelators which control many aspects of cell physiology. May have a dual substrate specificity, and function as a 2,3-bisphosphoglycerate 3-phosphatase hydrolyzing 2,3-bisphosphoglycerate to 2-phosphoglycerate. 2,3-bisphosphoglycerate (BPG) is formed as part of the Rapoport-Luebering glycolytic bypass. The protein is Multiple inositol polyphosphate phosphatase 1 (mipp1) of Dictyostelium discoideum (Social amoeba).